The following is a 486-amino-acid chain: Cysteine--tRNA ligase (486 aa).

Zn(2+) is bound at residue Cys-29. The 'HIGH' region motif lies at 31 to 41; the sequence is ITVYDYCHLGH. Cys-215, His-240, and Glu-244 together coordinate Zn(2+). A 'KMSKS' region motif is present at residues 272-276; the sequence is KMSKS. Position 275 (Lys-275) interacts with ATP.

This sequence belongs to the class-I aminoacyl-tRNA synthetase family. As to quaternary structure, monomer. Zn(2+) serves as cofactor.

The protein localises to the cytoplasm. It catalyses the reaction tRNA(Cys) + L-cysteine + ATP = L-cysteinyl-tRNA(Cys) + AMP + diphosphate. The sequence is that of Cysteine--tRNA ligase from Gloeothece citriformis (strain PCC 7424) (Cyanothece sp. (strain PCC 7424)).